The following is a 307-amino-acid chain: Nucleotide-binding protein Arth_2083 (307 aa).

Position 30–37 (30–37) interacts with ATP; the sequence is GMSGAGRS. 81–84 contacts GTP; the sequence is DVRS.

Belongs to the RapZ-like family.

Functionally, displays ATPase and GTPase activities. The polypeptide is Nucleotide-binding protein Arth_2083 (Arthrobacter sp. (strain FB24)).